Here is a 258-residue protein sequence, read N- to C-terminus: Thiazole synthase (258 aa).

Lys100 acts as the Schiff-base intermediate with DXP in catalysis. Residues Gly161, 187–188 (AG), and 209–210 (NT) each bind 1-deoxy-D-xylulose 5-phosphate.

Belongs to the ThiG family. In terms of assembly, homotetramer. Forms heterodimers with either ThiH or ThiS.

The protein resides in the cytoplasm. It catalyses the reaction [ThiS sulfur-carrier protein]-C-terminal-Gly-aminoethanethioate + 2-iminoacetate + 1-deoxy-D-xylulose 5-phosphate = [ThiS sulfur-carrier protein]-C-terminal Gly-Gly + 2-[(2R,5Z)-2-carboxy-4-methylthiazol-5(2H)-ylidene]ethyl phosphate + 2 H2O + H(+). Its pathway is cofactor biosynthesis; thiamine diphosphate biosynthesis. In terms of biological role, catalyzes the rearrangement of 1-deoxy-D-xylulose 5-phosphate (DXP) to produce the thiazole phosphate moiety of thiamine. Sulfur is provided by the thiocarboxylate moiety of the carrier protein ThiS. In vitro, sulfur can be provided by H(2)S. The protein is Thiazole synthase of Campylobacter jejuni subsp. jejuni serotype O:2 (strain ATCC 700819 / NCTC 11168).